Here is a 121-residue protein sequence, read N- to C-terminus: Large ribosomal subunit protein uL14c (121 aa).

This sequence belongs to the universal ribosomal protein uL14 family. In terms of assembly, part of the 50S ribosomal subunit.

The protein resides in the plastid. The protein localises to the chloroplast. Functionally, binds to 23S rRNA. The polypeptide is Large ribosomal subunit protein uL14c (Trieres chinensis (Marine centric diatom)).